The chain runs to 265 residues: tRNA (guanine-N(1)-)-methyltransferase (265 aa).

S-adenosyl-L-methionine is bound by residues glycine 110 and 129-134 (LGDFVM). The segment at 243 to 265 (LAAWGAPPPPLPKRRRGAKPNPN) is disordered. Positions 254–265 (PKRRRGAKPNPN) are enriched in basic residues.

It belongs to the RNA methyltransferase TrmD family. As to quaternary structure, homodimer.

It localises to the cytoplasm. The catalysed reaction is guanosine(37) in tRNA + S-adenosyl-L-methionine = N(1)-methylguanosine(37) in tRNA + S-adenosyl-L-homocysteine + H(+). In terms of biological role, specifically methylates guanosine-37 in various tRNAs. This is tRNA (guanine-N(1)-)-methyltransferase from Deinococcus geothermalis (strain DSM 11300 / CIP 105573 / AG-3a).